The following is a 637-amino-acid chain: MLNITLPDCSVRQYESPVTVAQIAASIGAGLAKAAVAGKVNGKLVDACDPIVEDSAVQIITPKDQEGIEIIRHSCAHLVGHAVKQLYPNAKMVIGPVIEEGFYYDIATEKPFTPEDVAAIEARMKELIAQDYDVVKIMTPRAEAIKIFQERGEEYKLRLIDDMPEVEAMGIYHHQEYVDMCRGPHVPNTRFLKNFKLTKLAGAYWRGDSNNEMLQRIYGTAWATKDELKDYIQRIEEAEKRDHRKLGKQLDLFHLQDEAPGMVFWHPKGWALWQTIEQHMRKELNAAGYKEVKTPQIMDKTFWEKSGHWDNYKDNMFVTSSEKREYAVKPMNCPGHVQIFNNGLRSYRDLPMRLAEFGSCHRNEPSGALHGLMRVRGFVQDDAHIFCTEDQIVSEARAFNELLVRIYKQFGFHDVSVRLSLRPEKRAGSDDVWDKAEQGLREALTACGVEWGELPGEGAFYGPKIEYHVKDALGRSWQCGTLQLDFVLPERLDAEYVTENNDRARPVMLHRAILGSLERFIGILIENHAGSFPLWLAPVQMVIMNITENQADYCREVAAKLQAAGFRAELDLRNEKIGYKIRDNSQYRFPYQIVIGDKEKQENKVAVRRKAEDLGSLDLDDFIAQLQQEITDALVNH.

The region spanning 1–61 (MLNITLPDCS…VEDSAVQIIT (61 aa)) is the TGS domain. Residues 242-533 (DHRKLGKQLD…LIENHAGSFP (292 aa)) are catalytic. Zn(2+)-binding residues include Cys-333, His-384, and His-510.

This sequence belongs to the class-II aminoacyl-tRNA synthetase family. As to quaternary structure, homodimer. Zn(2+) is required as a cofactor.

It is found in the cytoplasm. The catalysed reaction is tRNA(Thr) + L-threonine + ATP = L-threonyl-tRNA(Thr) + AMP + diphosphate + H(+). Functionally, catalyzes the attachment of threonine to tRNA(Thr) in a two-step reaction: L-threonine is first activated by ATP to form Thr-AMP and then transferred to the acceptor end of tRNA(Thr). Also edits incorrectly charged L-seryl-tRNA(Thr). This chain is Threonine--tRNA ligase, found in Neisseria gonorrhoeae (strain ATCC 700825 / FA 1090).